The primary structure comprises 1398 residues: Pyrolysin (1398 aa).

Residues 1 to 26 (MNKKGLTVLFIAIMLLSVVPVHFVSA) form the signal peptide. Positions 27 to 149 (GTPPVSSENS…KTKEPSLEPK (123 aa)) are excised as a propeptide. The N-linked (GlcNAc...) asparagine glycan is linked to Asn152. A Peptidase S8 domain is found at 154 to 656 (TWVINALQFI…HGLVNVTKSW (503 aa)). Asp179 (charge relay system) is an active-site residue. N-linked (GlcNAc...) asparagine glycans are attached at residues Asn222, Asn228, Asn240, Asn257, Asn262, Asn298, and Asn327. His365 acts as the Charge relay system in catalysis. Asn406 is a glycosylation site (N-linked (GlcNAc...) asparagine). Ser590 (charge relay system) is an active-site residue. 19 N-linked (GlcNAc...) asparagine glycosylation sites follow: Asn651, Asn663, Asn739, Asn792, Asn893, Asn908, Asn917, Asn929, Asn1048, Asn1056, Asn1084, Asn1117, Asn1133, Asn1140, Asn1148, Asn1208, Asn1233, Asn1237, and Asn1332.

The protein belongs to the peptidase S8 family. In terms of processing, LWM pyrolysin seems to be produced by autoproteolytic activation of HMW pyrolysin. Glycosylated.

The protein localises to the cell envelope. Its function is as follows. Has endopeptidase activity toward caseins, casein fragments including alpha-S1-casein and synthetic peptides. This Pyrococcus furiosus (strain ATCC 43587 / DSM 3638 / JCM 8422 / Vc1) protein is Pyrolysin (pls).